A 688-amino-acid chain; its full sequence is Potassium-transporting ATPase ATP-binding subunit (688 aa).

4 helical membrane passes run 37–57, 65–85, 219–239, and 262–282; these read FIVYIASILTTVLYVFSLFGI, ILFISILLWFTVLFANFAEAI, IALQILLVSLTIIFLVVTASL, and LALLVCLAPTTIGALLSAIGI. The active-site 4-aspartylphosphate intermediate is Asp313. ATP contacts are provided by residues Asp350, Glu354, 383-390, and Lys401; that span reads FTAKTRMS. Residues Asp524 and Asp528 each coordinate Mg(2+). 3 consecutive transmembrane segments (helical) span residues 586–606, 622–642, and 668–688; these read IANDIAKYFAIIPPLFIGLFP, AILSAVIYNAFIIIFLIPLAL, and IIAPFIAIKGIDILITMLGIV.

This sequence belongs to the cation transport ATPase (P-type) (TC 3.A.3) family. Type IA subfamily. As to quaternary structure, the system is composed of three essential subunits: KdpA, KdpB and KdpC.

The protein localises to the cell membrane. It catalyses the reaction K(+)(out) + ATP + H2O = K(+)(in) + ADP + phosphate + H(+). Its function is as follows. Part of the high-affinity ATP-driven potassium transport (or Kdp) system, which catalyzes the hydrolysis of ATP coupled with the electrogenic transport of potassium into the cytoplasm. This subunit is responsible for energy coupling to the transport system and for the release of the potassium ions to the cytoplasm. This chain is Potassium-transporting ATPase ATP-binding subunit, found in Clostridium perfringens (strain ATCC 13124 / DSM 756 / JCM 1290 / NCIMB 6125 / NCTC 8237 / Type A).